Reading from the N-terminus, the 336-residue chain is UDP-galactose transporter 1 (336 aa).

A run of 9 helical transmembrane segments spans residues 11–31 (LAILQWWGFNVTVIIMNKWIF), 38–58 (FPLSVSCVHFICSSIGAYIVI), 83–103 (FVFCINIVLGNVSLRYIPVSF), 131–151 (IWASLVPIVGGILLTSVTELS), 154–174 (MFGFCAALFGCLATSTKTILA), 193–213 (APFATMILGIPALLLEGSGIL), 227–247 (IIILSSGVLAFCLNFSIFYVI), 254–274 (TFNVAGNLKVAVAVMVSWLIF), and 278–298 (ISYMNAVGCGITLVGCTFYGY).

Belongs to the TPT transporter family. TPT (TC 2.A.7.9) subfamily.

It is found in the membrane. Nucleotide sugar transporter that specifically transports UDP-galactose. The sequence is that of UDP-galactose transporter 1 from Arabidopsis thaliana (Mouse-ear cress).